Consider the following 544-residue polypeptide: Membrane protein insertase YidC (544 aa).

6 helical membrane passes run L13–L33, L321–P341, W343–F363, L409–V429, L461–L481, and M506–I526.

Belongs to the OXA1/ALB3/YidC family. Type 1 subfamily. Interacts with the Sec translocase complex via SecD. Specifically interacts with transmembrane segments of nascent integral membrane proteins during membrane integration.

The protein resides in the cell inner membrane. In terms of biological role, required for the insertion and/or proper folding and/or complex formation of integral membrane proteins into the membrane. Involved in integration of membrane proteins that insert both dependently and independently of the Sec translocase complex, as well as at least some lipoproteins. Aids folding of multispanning membrane proteins. The chain is Membrane protein insertase YidC from Borreliella afzelii (strain PKo) (Borrelia afzelii).